A 93-amino-acid chain; its full sequence is Small ribosomal subunit protein uS19 (93 aa).

The protein belongs to the universal ribosomal protein uS19 family.

Protein S19 forms a complex with S13 that binds strongly to the 16S ribosomal RNA. The protein is Small ribosomal subunit protein uS19 of Salinispora tropica (strain ATCC BAA-916 / DSM 44818 / JCM 13857 / NBRC 105044 / CNB-440).